The following is a 185-amino-acid chain: Ribosome maturation factor RimP (185 aa).

The protein belongs to the RimP family.

The protein localises to the cytoplasm. Its function is as follows. Required for maturation of 30S ribosomal subunits. The protein is Ribosome maturation factor RimP of Magnetococcus marinus (strain ATCC BAA-1437 / JCM 17883 / MC-1).